The chain runs to 504 residues: Peroxisomal N(1)-acetyl-spermine/spermidine oxidase (504 aa).

FAD is bound by residues Ala16, Glu37, Arg45, and 61 to 62; that span reads HW. Positions 64 and 187 each coordinate substrate. Residue Val240 coordinates FAD. Asn313 lines the substrate pocket. Residues Glu465 and 474 to 475 contribute to the FAD site; that span reads TT. The Microbody targeting signal motif lies at 502 to 504; sequence PRL.

Belongs to the flavin monoamine oxidase family. Monomer. It depends on FAD as a cofactor. In terms of tissue distribution, widely expressed at different developmental stages. Expressed at high level in the liver and the stomach, expressed at lower level in heart, spleen, thymus, small intestine, muscle, pancreas, uterus, and breast and expressed at very low level in brain, kidney, lung, testis, skin, adrenal gland and prostate gland.

It is found in the peroxisome. Its subcellular location is the cytoplasm. It catalyses the reaction N(1)-acetylspermine + O2 + H2O = 3-acetamidopropanal + spermidine + H2O2. The enzyme catalyses N(1)-acetylspermidine + O2 + H2O = 3-acetamidopropanal + putrescine + H2O2. The catalysed reaction is N(1),N(12)-diacetylspermine + O2 + H2O = 3-acetamidopropanal + N(1)-acetylspermidine + H2O2. It functions in the pathway amine and polyamine metabolism; spermine metabolism. Its function is as follows. Flavoenzyme which catalyzes the oxidation of N(1)-acetylspermine to spermidine and is thus involved in the polyamine back-conversion. Can also oxidize N(1)-acetylspermidine to putrescine. Substrate specificity: N(1)-acetylspermine = N(1)-acetylspermidine &gt; N(1),N(12)-diacylspermine &gt;&gt; spermine. Does not oxidize spermidine. Plays an important role in the regulation of polyamine intracellular concentration and has the potential to act as a determinant of cellular sensitivity to the antitumor polyamine analogs. This Mus musculus (Mouse) protein is Peroxisomal N(1)-acetyl-spermine/spermidine oxidase (Paox).